A 1020-amino-acid polypeptide reads, in one-letter code: Mediator of RNA polymerase II transcription subunit 16 (1020 aa).

The protein belongs to the Mediator complex subunit 16 family. As to quaternary structure, component of the Mediator complex.

It localises to the nucleus. Functionally, component of the Mediator complex, a coactivator involved in the regulated transcription of nearly all RNA polymerase II-dependent genes. Mediator functions as a bridge to convey information from gene-specific regulatory proteins to the basal RNA polymerase II transcription machinery. Mediator is recruited to promoters by direct interactions with regulatory proteins and serves as a scaffold for the assembly of a functional preinitiation complex with RNA polymerase II and the general transcription factors. In Scheffersomyces stipitis (strain ATCC 58785 / CBS 6054 / NBRC 10063 / NRRL Y-11545) (Yeast), this protein is Mediator of RNA polymerase II transcription subunit 16 (SIN4).